Reading from the N-terminus, the 180-residue chain is Dual-action ribosomal maturation protein DarP (180 aa).

It belongs to the DarP family.

The protein localises to the cytoplasm. In terms of biological role, member of a network of 50S ribosomal subunit biogenesis factors which assembles along the 30S-50S interface, preventing incorrect 23S rRNA structures from forming. Promotes peptidyl transferase center (PTC) maturation. This is Dual-action ribosomal maturation protein DarP from Chromobacterium violaceum (strain ATCC 12472 / DSM 30191 / JCM 1249 / CCUG 213 / NBRC 12614 / NCIMB 9131 / NCTC 9757 / MK).